The primary structure comprises 765 residues: Periplasmic beta-glucosidase (765 aa).

The first 20 residues, 1–20 (MKWLCSVGVAVSLAMQPALA), serve as a signal peptide directing secretion. Asp287 is a catalytic residue.

It belongs to the glycosyl hydrolase 3 family.

It is found in the periplasm. It carries out the reaction Hydrolysis of terminal, non-reducing beta-D-glucosyl residues with release of beta-D-glucose.. The sequence is that of Periplasmic beta-glucosidase (bglX) from Salmonella typhimurium (strain LT2 / SGSC1412 / ATCC 700720).